A 312-amino-acid polypeptide reads, in one-letter code: Ribosomal protein L11 methyltransferase (312 aa).

4 residues coordinate S-adenosyl-L-methionine: Thr162, Gly183, Asp205, and Asn248.

The protein belongs to the methyltransferase superfamily. PrmA family.

The protein localises to the cytoplasm. It carries out the reaction L-lysyl-[protein] + 3 S-adenosyl-L-methionine = N(6),N(6),N(6)-trimethyl-L-lysyl-[protein] + 3 S-adenosyl-L-homocysteine + 3 H(+). In terms of biological role, methylates ribosomal protein L11. In Geobacillus thermodenitrificans (strain NG80-2), this protein is Ribosomal protein L11 methyltransferase.